Consider the following 324-residue polypeptide: Cytochrome c biogenesis protein CcsA (324 aa).

The next 8 helical transmembrane spans lie at 15-35 (FSIVCIVITIHLITLLIDEII), 44-64 (GMIATFLCITVLLVTRCIYSG), 71-91 (LYESLIFLSWSLSFIHIVPYF), 98-118 (LSTITASSVIFTQGFATSGLL), 143-163 (MILGYAALLCGSLLSVALLVL), 228-248 (VISLGFIFLTIGILSGAVWAN), 255-275 (WNWDPKETWAFITWIVFAVYL), and 289-309 (AIVASMGFLIIWICYFGVNLL).

It belongs to the CcmF/CycK/Ccl1/NrfE/CcsA family. May interact with Ccs1.

Its subcellular location is the plastid. It localises to the chloroplast thylakoid membrane. In terms of biological role, required during biogenesis of c-type cytochromes (cytochrome c6 and cytochrome f) at the step of heme attachment. The polypeptide is Cytochrome c biogenesis protein CcsA (Daucus carota (Wild carrot)).